We begin with the raw amino-acid sequence, 74 residues long: Small ribosomal subunit protein bS18 (74 aa).

This sequence belongs to the bacterial ribosomal protein bS18 family. As to quaternary structure, part of the 30S ribosomal subunit. Forms a tight heterodimer with protein bS6.

Binds as a heterodimer with protein bS6 to the central domain of the 16S rRNA, where it helps stabilize the platform of the 30S subunit. The sequence is that of Small ribosomal subunit protein bS18 from Sphingopyxis alaskensis (strain DSM 13593 / LMG 18877 / RB2256) (Sphingomonas alaskensis).